Here is a 280-residue protein sequence, read N- to C-terminus: Lysosome-associated membrane glycoprotein 5 (280 aa).

Residues 1-29 (MDLRRRALLGVDGLRVLLMLFHTVTRIMA) form the signal peptide. The Extracellular segment spans residues 30–235 (EQEVENLSGL…PVDEREQLEE (206 aa)). N-linked (GlcNAc...) asparagine glycans are attached at residues asparagine 35 and asparagine 53. Residues 236-256 (TLPLILGLILGLVIVVTLVIY) form a helical membrane-spanning segment. The Cytoplasmic portion of the chain corresponds to 257–280 (HIHHKMTANQVQIPRDRSQYKHMG).

Belongs to the LAMP family. Glycosylated.

It is found in the cytoplasmic vesicle membrane. The protein localises to the cell membrane. The protein resides in the cell projection. Its subcellular location is the dendrite. It localises to the cytoplasmic vesicle. It is found in the secretory vesicle. The protein localises to the synaptic vesicle membrane. The protein resides in the growth cone membrane. Its subcellular location is the early endosome membrane. It localises to the recycling endosome. It is found in the endoplasmic reticulum-Golgi intermediate compartment membrane. The protein localises to the endosome membrane. Plays a role in short-term synaptic plasticity in a subset of GABAergic neurons in the brain. The chain is Lysosome-associated membrane glycoprotein 5 (LAMP5) from Bos taurus (Bovine).